The sequence spans 130 residues: Small ribosomal subunit protein uS9 (130 aa).

It belongs to the universal ribosomal protein uS9 family.

The protein is Small ribosomal subunit protein uS9 of Pseudomonas fluorescens (strain SBW25).